The chain runs to 134 residues: S-protein homolog 18 (134 aa).

A signal peptide spans methionine 1–alanine 25. Asparagine 87 carries an N-linked (GlcNAc...) asparagine glycan.

The protein belongs to the plant self-incompatibility (S1) protein family.

It localises to the secreted. The chain is S-protein homolog 18 from Arabidopsis thaliana (Mouse-ear cress).